The primary structure comprises 697 residues: Elongation factor G 2 (697 aa).

Residues 6 to 281 enclose the tr-type G domain; it reads TNYRNFGIFA…AVVDFLPNPT (276 aa). GTP contacts are provided by residues 15 to 22, 79 to 83, and 133 to 136; these read AHVDAGKT, DTPGH, and NKLD.

Belongs to the TRAFAC class translation factor GTPase superfamily. Classic translation factor GTPase family. EF-G/EF-2 subfamily.

It localises to the cytoplasm. In terms of biological role, catalyzes the GTP-dependent ribosomal translocation step during translation elongation. During this step, the ribosome changes from the pre-translocational (PRE) to the post-translocational (POST) state as the newly formed A-site-bound peptidyl-tRNA and P-site-bound deacylated tRNA move to the P and E sites, respectively. Catalyzes the coordinated movement of the two tRNA molecules, the mRNA and conformational changes in the ribosome. This chain is Elongation factor G 2, found in Trichodesmium erythraeum (strain IMS101).